A 357-amino-acid chain; its full sequence is Peptide chain release factor 1 (357 aa).

N5-methylglutamine is present on Gln234. The segment at 249–308 (PSGVEVSCQDEKSQHKNRSKAMRVLRSRVYEKKREEQQAEREEARRSMVGSGDRSAKIRT) is disordered. A compositionally biased stretch (basic residues) spans 263–274 (HKNRSKAMRVLR). A compositionally biased stretch (basic and acidic residues) spans 276–294 (RVYEKKREEQQAEREEARR).

Belongs to the prokaryotic/mitochondrial release factor family. In terms of processing, methylated by PrmC. Methylation increases the termination efficiency of RF1.

It is found in the cytoplasm. Functionally, peptide chain release factor 1 directs the termination of translation in response to the peptide chain termination codons UAG and UAA. The protein is Peptide chain release factor 1 of Salinibacter ruber (strain DSM 13855 / M31).